The chain runs to 263 residues: Protein IQ-DOMAIN 9 (263 aa).

Positions 16–41 (SKQGTEKKKTSAVKPKKGSKKKGTSL) are disordered. The short motif at 21–28 (EKKKTSAV) is the Nuclear localization signal 1 element. The span at 25-38 (TSAVKPKKGSKKKG) shows a compositional bias: basic residues. In terms of domain architecture, IQ spans 46-75 (EDWAATRIQTAFKAYKARKSLRRLKGIARA). A calmodulin-binding region spans residues 59 to 78 (AYKARKSLRRLKGIARAKLS). A Nuclear localization signal 2 motif is present at residues 107-114 (ARRVCMVT). Positions 216 to 263 (TPKKPKSSKTDSNSPAKRTVSLSSVPAKTPFPGARNTVKPRRLSFPGA) are disordered. Residues 226–241 (DSNSPAKRTVSLSSVP) are compositionally biased toward polar residues.

It belongs to the IQD family. Binds to multiple calmodulin (CaM) in the presence of Ca(2+) and CaM-like proteins.

Its subcellular location is the nucleus. It localises to the nuclear body. Functionally, may be involved in cooperative interactions with calmodulins or calmodulin-like proteins. Recruits calmodulin proteins to microtubules, thus being a potential scaffold in cellular signaling and trafficking. May associate with nucleic acids and regulate gene expression at the transcriptional or post-transcriptional level. This chain is Protein IQ-DOMAIN 9, found in Arabidopsis thaliana (Mouse-ear cress).